Reading from the N-terminus, the 136-residue chain is Glutamate-rich protein 4 (136 aa).

Positions 92–136 (EEEEEEEQEEKSCVEENKGPEEKQDEERSRSSYPAQRLPDFGMTI) are disordered. Basic and acidic residues predominate over residues 101–121 (EKSCVEENKGPEEKQDEERSR).

The protein is Glutamate-rich protein 4 (Erich4) of Mus musculus (Mouse).